Reading from the N-terminus, the 257-residue chain is Outer membrane protein Omp26La (257 aa).

A signal peptide spans 1–19; the sequence is MKKIALFITASLIAGNTLA.

The protein belongs to the MipA/OmpV family.

The protein localises to the cell outer membrane. The polypeptide is Outer membrane protein Omp26La (Vibrio anguillarum (Listonella anguillarum)).